Here is a 972-residue protein sequence, read N- to C-terminus: 116 kDa U5 small nuclear ribonucleoprotein component (972 aa).

Methionine 1 carries the post-translational modification N-acetylmethionine. The disordered stretch occupies residues 1–54 (MDTDLYDEFGNYIGPELDSDEDDDELGRETKDLDEMDDDDDDDDVGDHDDDHPG). Acidic residues-rich tracts occupy residues 17–26 (LDSDEDDDEL) and 34–48 (DEMD…VGDH). Phosphoserine is present on serine 19. Lysine 64 is covalently cross-linked (Glycyl lysine isopeptide (Lys-Gly) (interchain with G-Cter in SUMO1); alternate). A Glycyl lysine isopeptide (Lys-Gly) (interchain with G-Cter in SUMO2); alternate cross-link involves residue lysine 64. Residue threonine 86 is modified to Phosphothreonine. The region spanning 127–409 (ELIRNVTLCG…GIHLTKEELK (283 aa)) is the tr-type G domain. GTP-binding positions include 136 to 143 (GHLHHGKT), 204 to 208 (DTPGH), and 258 to 261 (NKID).

This sequence belongs to the TRAFAC class translation factor GTPase superfamily. Classic translation factor GTPase family. EF-G/EF-2 subfamily. As to quaternary structure, component of the U5 snRNP and the U4/U6-U5 tri-snRNP complex, a building block of the spliceosome. The U4/U6-U5 tri-snRNP complex is composed of the U4, U6 and U5 snRNAs and at least PRPF3, PRPF4, PRPF6, PRPF8, PRPF31, SNRNP200, TXNL4A, SNRNP40, DDX23, CD2BP2, PPIH, SNU13, EFTUD2, SART1 and USP39. Component of the pre-catalytic, catalytic and post-catalytic spliceosome complexes. Component of the minor spliceosome, which splices U12-type introns. Within this complex, interacts with CRIPT. Interacts with ERBB4 and PRPF8. Interacts with PIH1D1. Interacts with RPAP3 and URI1 in a ZNHIT2-dependent manner. Interacts with NRDE2. Interacts with FAM50A. Interacts with UBL5.

It is found in the nucleus. In terms of biological role, required for pre-mRNA splicing as component of the spliceosome, including pre-catalytic, catalytic and post-catalytic spliceosomal complexes. Component of the U5 snRNP and the U4/U6-U5 tri-snRNP complex, a building block of the spliceosome. As a component of the minor spliceosome, involved in the splicing of U12-type introns in pre-mRNAs. This chain is 116 kDa U5 small nuclear ribonucleoprotein component (EFTUD2), found in Homo sapiens (Human).